We begin with the raw amino-acid sequence, 83 residues long: RNA-binding protein Hfq (83 aa).

The region spanning D10 to V69 is the Sm domain.

Belongs to the Hfq family. As to quaternary structure, homohexamer.

RNA chaperone that binds small regulatory RNA (sRNAs) and mRNAs to facilitate mRNA translational regulation in response to envelope stress, environmental stress and changes in metabolite concentrations. Also binds with high specificity to tRNAs. This chain is RNA-binding protein Hfq, found in Paracidovorax citrulli (strain AAC00-1) (Acidovorax citrulli).